A 51-amino-acid polypeptide reads, in one-letter code: Sperm protamine P1 (51 aa).

This sequence belongs to the protamine P1 family. Testis.

It is found in the nucleus. Its subcellular location is the chromosome. Protamines substitute for histones in the chromatin of sperm during the haploid phase of spermatogenesis. They compact sperm DNA into a highly condensed, stable and inactive complex. The sequence is that of Sperm protamine P1 (PRM1) from Nasalis larvatus (Proboscis monkey).